Reading from the N-terminus, the 737-residue chain is Alpha-adducin (737 aa).

Position 1 is an N-acetylmethionine (M1). The segment at 1–21 (MNGDSRAAVVTSPPPTTAPHK) is disordered. The residue at position 12 (S12) is a Phosphoserine. S59 bears the Phosphoserine; by PKA mark. Position 64 is a phosphoserine (S64). T331 bears the Phosphothreonine mark. 5 positions are modified to phosphoserine: S334, S353, S355, S358, and S366. S408 carries the phosphoserine; by PKA modification. 2 disordered regions span residues 421–486 (FASD…SAVP) and 576–737 (RREV…KSDS). S427 is subject to Phosphoserine. T429 bears the Phosphothreonine mark. S431 carries the phosphoserine modification. S436 bears the Phosphoserine; by PKA mark. Phosphothreonine; by ROCK2 is present on T445. Phosphoserine is present on residues S464 and S465. Position 480 is a phosphothreonine; by ROCK2 (T480). S481 is subject to Phosphoserine; by PKA. Positions 576–601 (RREVERKQKGSEENLDEAREQKEKSP) are enriched in basic and acidic residues. A phosphoserine mark is found at S586, S600, and S613. Positions 602-614 (PDQPAVPHPPPST) are enriched in pro residues. T614 is modified (phosphothreonine). Residues S678, S707, S710, and S714 each carry the phosphoserine modification. Over residues 687 to 714 (PVAEEAAPSAVEEGAAADPGSDGSPGKS) the composition is skewed to low complexity. Residues 715-737 (PSKKKKKFRTPSFLKKSKKKSDS) show a composition bias toward basic residues. Position 716 is a phosphoserine; by PKC (S716). Residues 717–734 (KKKKKFRTPSFLKKSKKK) are interaction with calmodulin. At S726 the chain carries Phosphoserine; by PKA and PKC.

It belongs to the aldolase class II family. Adducin subfamily. In terms of assembly, heterodimer of an alpha and a beta subunit or an alpha and a gamma subunit. As to expression, expressed in all tissues. Found in much higher levels in reticulocytes than the beta subunit.

Its subcellular location is the cytoplasm. The protein localises to the cytoskeleton. It localises to the cell membrane. In terms of biological role, membrane-cytoskeleton-associated protein that promotes the assembly of the spectrin-actin network. Binds to calmodulin. This chain is Alpha-adducin (ADD1), found in Homo sapiens (Human).